A 461-amino-acid chain; its full sequence is Phosphatidate cytidylyltransferase 1 (461 aa).

The interval 1–68 (MLELRHRGGC…PEVPPSSDRT (68 aa)) is disordered. Arginine 7 is subject to Omega-N-methylarginine. The segment covering 22 to 56 (REGEAAGGDHETESTSDKETDIDDRYGDLDARGDS) has biased composition (basic and acidic residues). Residues serine 35 and serine 37 each carry the phosphoserine modification. 6 helical membrane passes run 96 to 116 (MISL…LLVL), 149 to 169 (FLLC…FATF), 183 to 203 (HRFI…LSLV), 230 to 250 (LVIQ…SSVI), 279 to 299 (GFIG…YVLS), and 357 to 377 (IALS…ASGF).

Belongs to the CDS family. As to quaternary structure, homodimer. Interacts with FOS; this interaction may enhance catalytic activity. Requires Mg(2+) as cofactor. Expressed in adult brain, eye, smooth muscle and testis. Highly expressed in the inner segment of the photoreceptor layer of adult retina.

Its subcellular location is the endoplasmic reticulum membrane. The catalysed reaction is a 1,2-diacyl-sn-glycero-3-phosphate + CTP + H(+) = a CDP-1,2-diacyl-sn-glycerol + diphosphate. It catalyses the reaction 1-octadecanoyl-2-(5Z,8Z,11Z,14Z-eicosatetraenoyl)-sn-glycero-3-phosphate + CTP + H(+) = 1-octadecanoyl-2-(5Z,8Z,11Z,14Z-eicosatetraenoyl)-sn-glycero-3-cytidine-5'-diphosphate + diphosphate. It carries out the reaction 1-octadecanoyl-2-(9Z,12Z-octadecadienoyl)-sn-glycero-3-phosphate + CTP + H(+) = 1-octadecanoyl-2-(9Z,12Z-octadecadienoyl)-sn-glycero-3-cytidine-5'-diphosphate + diphosphate. The enzyme catalyses 1-hexadecanoyl-2-(5Z,8Z,11Z,14Z-eicosatetraenoyl)-sn-glycero-3-phosphate + CTP + H(+) = 1-hexadecanoyl-2-(5Z,8Z,11Z,14Z-eicosatetraenoyl)-sn-glycero-3-cytidine-5'-diphosphate + diphosphate. The catalysed reaction is 1,2-di-(5Z,8Z,11Z,14Z)-eicosatetraenoyl-sn-glycero-3-phosphate + CTP + H(+) = 1,2-di-(5Z,8Z,11Z,14Z-eicosatetraenoyl)-sn-glycero-3-cytidine-5'-diphosphate + diphosphate. It catalyses the reaction 1-octadecanoyl-2-(9Z-octadecenoyl)-sn-glycero-3-phosphate + CTP + H(+) = 1-octadecanoyl-2-(9Z-octadecenoyl)-sn-glycero-3-cytidine-5'-diphosphate + diphosphate. It carries out the reaction 1-octadecanoyl-2-(4Z,7Z,10Z,13Z,16Z,19Z-docosahexaenoyl)-sn-glycero-3-phosphate + CTP + H(+) = 1-octadecanoyl-2-(4Z,7Z,10Z,13Z,16Z,19Z-docosahexaenoyl)-sn-glycero-3-cytidine-5'-diphosphate + diphosphate. The enzyme catalyses 1,2-di-(9Z,12Z-octadecadienoyl)-sn-glycero-3-phosphate + CTP + H(+) = 1,2-di-(9Z,12Z-octadecadienoyl)-sn-glycero-3-cytidine-5'-diphosphate + diphosphate. The catalysed reaction is 1,2-di-(9Z-octadecenoyl)-sn-glycero-3-phosphate + CTP + H(+) = 1,2-di-(9Z-octadecenoyl)-sn-glycero-3-cytidine-5'-diphosphate + diphosphate. It functions in the pathway phospholipid metabolism; CDP-diacylglycerol biosynthesis; CDP-diacylglycerol from sn-glycerol 3-phosphate: step 3/3. Functionally, catalyzes the conversion of phosphatidic acid (PA) to CDP-diacylglycerol (CDP-DAG), an essential intermediate in the synthesis of phosphatidylglycerol, cardiolipin and phosphatidylinositol. Exhibits almost no acyl chain preference for PA, showing no discrimination for the sn-1/sn-2 acyl chain composition of PAs. Plays an important role in regulating the growth of lipid droplets which are storage organelles at the center of lipid and energy homeostasis. Positively regulates the differentiation and development of adipocytes. In Mus musculus (Mouse), this protein is Phosphatidate cytidylyltransferase 1.